Here is a 552-residue protein sequence, read N- to C-terminus: Small ribosomal subunit protein bS1 (552 aa).

6 consecutive S1 motif domains span residues 31 to 101 (TIKE…ISQQ), 116 to 179 (NAII…ISRK), 200 to 268 (TEPV…LSIK), 285 to 355 (GYAI…VSLK), 372 to 440 (GDIV…LSAK), and 457 to 521 (DSVI…ASVH).

This sequence belongs to the bacterial ribosomal protein bS1 family.

Functionally, binds mRNA; thus facilitating recognition of the initiation point. It is needed to translate mRNA with a short Shine-Dalgarno (SD) purine-rich sequence. The chain is Small ribosomal subunit protein bS1 (rpsA) from Helicobacter pylori (strain J99 / ATCC 700824) (Campylobacter pylori J99).